A 347-amino-acid chain; its full sequence is Protein pelota homolog (347 aa).

Belongs to the eukaryotic release factor 1 family. Pelota subfamily. As to quaternary structure, monomer. Requires a divalent metal cation as cofactor.

It localises to the cytoplasm. Functionally, may function in recognizing stalled ribosomes, interact with stem-loop structures in stalled mRNA molecules, and effect endonucleolytic cleavage of the mRNA. May play a role in the release non-functional ribosomes and degradation of damaged mRNAs. Has endoribonuclease activity. In Methanocaldococcus jannaschii (strain ATCC 43067 / DSM 2661 / JAL-1 / JCM 10045 / NBRC 100440) (Methanococcus jannaschii), this protein is Protein pelota homolog.